Here is a 115-residue protein sequence, read N- to C-terminus: Holo-[acyl-carrier-protein] synthase (115 aa).

Mg(2+) contacts are provided by D6 and E51.

The protein belongs to the P-Pant transferase superfamily. AcpS family. Mg(2+) is required as a cofactor.

The protein localises to the cytoplasm. The catalysed reaction is apo-[ACP] + CoA = holo-[ACP] + adenosine 3',5'-bisphosphate + H(+). Its function is as follows. Transfers the 4'-phosphopantetheine moiety from coenzyme A to a Ser of acyl-carrier-protein. The sequence is that of Holo-[acyl-carrier-protein] synthase from Campylobacter jejuni subsp. jejuni serotype O:2 (strain ATCC 700819 / NCTC 11168).